Here is a 1224-residue protein sequence, read N- to C-terminus: Dynactin subunit 1 (1224 aa).

Residues 1–10 are compositionally biased toward basic residues; the sequence is MAQSRRHPHG. The segment at 1-30 is disordered; that stretch reads MAQSRRHPHGRASSAGPRMSTEASSKPLKV. The CAP-Gly domain maps to 49 to 91; sequence GATLXATGKWVGVILDEAKGKNDGTVQGRKYFTCEENHGIFVR. 3 disordered regions span residues 100-217, 374-402, and 888-918; these read DGAD…RSQV, SASE…RQQR, and PHCH…PPAE. The span at 117-146 shows a compositional bias: basic residues; that stretch reads VPKRHSRXAAKGSKLRGAKPKKTTARRPKP. Residues 148–180 show a composition bias toward low complexity; sequence RTPTSAPSSGTAGPSGSASASGGEMSSSEPSTP. A coiled-coil region spans residues 205–540; sequence SPTKEEENLR…QEASAEKQQQ (336 aa). Residues 207-217 show a composition bias toward basic and acidic residues; sequence TKEEENLRSQV. Coiled coils occupy residues 936–1042 and 1081–1117; these read LKLE…EGLR and KDSP…LELA. Positions 1203–1224 are disordered; sequence WCSSSRARASPPASACSPPRPS. Positions 1204-1224 are enriched in low complexity; sequence CSSSRARASPPASACSPPRPS.

It belongs to the dynactin 150 kDa subunit family. As to quaternary structure, monomer and homodimer. Subunit of dynactin, a multiprotein complex part of a tripartite complex with dynein and a adapter, such as BICDL1, BICD2 or HOOK3. The dynactin complex is built around ACTR1A/ACTB filament and consists of an actin-related filament composed of a shoulder domain, a pointed end and a barbed end. Its length is defined by its flexible shoulder domain. The soulder is composed of 2 DCTN1 subunits, 4 DCTN2 and 2 DCTN3. DCTN1/p150(glued) binds directly to microtubules and to cytoplasmic dynein. As to expression, ubiquitously expressed.

It localises to the cytoplasm. The protein resides in the cytoskeleton. It is found in the microtubule organizing center. The protein localises to the centrosome. Its subcellular location is the centriole. It localises to the spindle. The protein resides in the cell cortex. Its function is as follows. Part of the dynactin complex that activates the molecular motor dynein for ultra-processive transport along microtubules. Plays a key role in dynein-mediated retrograde transport of vesicles and organelles along microtubules by recruiting and tethering dynein to microtubules. Binds to both dynein and microtubules providing a link between specific cargos, microtubules and dynein. Essential for targeting dynein to microtubule plus ends, recruiting dynein to membranous cargos and enhancing dynein processivity (the ability to move along a microtubule for a long distance without falling off the track). Can also act as a brake to slow the dynein motor during motility along the microtubule. Can regulate microtubule stability by promoting microtubule formation, nucleation and polymerization and by inhibiting microtubule catastrophe in neurons. Inhibits microtubule catastrophe by binding both to microtubules and to tubulin, leading to enhanced microtubule stability along the axon. Plays a role in metaphase spindle orientation. Plays a role in centriole cohesion and subdistal appendage organization and function. Its recruitment to the centriole in a KIF3A-dependent manner is essential for the maintenance of centriole cohesion and the formation of subdistal appendage. Also required for microtubule anchoring at the mother centriole. Plays a role in primary cilia formation. In Gallus gallus (Chicken), this protein is Dynactin subunit 1 (DCTN1).